Here is a 452-residue protein sequence, read N- to C-terminus: Pup--protein ligase (452 aa).

Residue Glu9 coordinates Mg(2+). An ATP-binding site is contributed by Arg53. Residue Tyr55 coordinates Mg(2+). Asp57 (proton acceptor) is an active-site residue. Mg(2+) is bound at residue Glu63. ATP contacts are provided by Thr66 and Trp419.

The protein belongs to the Pup ligase/Pup deamidase family. Pup-conjugating enzyme subfamily.

The enzyme catalyses ATP + [prokaryotic ubiquitin-like protein]-L-glutamate + [protein]-L-lysine = ADP + phosphate + N(6)-([prokaryotic ubiquitin-like protein]-gamma-L-glutamyl)-[protein]-L-lysine.. It functions in the pathway protein degradation; proteasomal Pup-dependent pathway. The protein operates within protein modification; protein pupylation. In terms of biological role, catalyzes the covalent attachment of the prokaryotic ubiquitin-like protein modifier Pup to the proteasomal substrate proteins, thereby targeting them for proteasomal degradation. This tagging system is termed pupylation. The ligation reaction involves the side-chain carboxylate of the C-terminal glutamate of Pup and the side-chain amino group of a substrate lysine. This chain is Pup--protein ligase, found in Thermobifida fusca (strain YX).